Here is a 138-residue protein sequence, read N- to C-terminus: Ribosome-binding factor A (138 aa).

The segment covering 1–20 has biased composition (low complexity); that stretch reads MSSRPPSSSGPAGIPKGAPS. The disordered stretch occupies residues 1 to 21; sequence MSSRPPSSSGPAGIPKGAPSQ.

It belongs to the RbfA family. Monomer. Binds 30S ribosomal subunits, but not 50S ribosomal subunits or 70S ribosomes.

The protein localises to the cytoplasm. Its function is as follows. One of several proteins that assist in the late maturation steps of the functional core of the 30S ribosomal subunit. Associates with free 30S ribosomal subunits (but not with 30S subunits that are part of 70S ribosomes or polysomes). Required for efficient processing of 16S rRNA. May interact with the 5'-terminal helix region of 16S rRNA. This Granulibacter bethesdensis (strain ATCC BAA-1260 / CGDNIH1) protein is Ribosome-binding factor A.